The primary structure comprises 454 residues: MLRERIKKFHFIGIGGIGMSGIAQILLEMGYKVSGSDISENKNTKLLKQKGAKIYIGHRPENLGDAQVVVYSSAVKPDNPEIQEAKRRNIPVIPRGEMLAELFKLKEGIAVSGSHGKTTTTSMIAEILINAGLEPTVIIGGRLKRLGTNAKLGRGELLVSEADESDGSFLKLQPAVAVITNVDKEHLDFYENFERVKEAFEQFMNSVPFYGFAVVNLDDPTLAQLVKKSHERVITYGINSPALVRAKNLYLKEGRYEFGVEFKGKELGRIHLGIAGIHNVYNALAATGVALELGVSFEVIKKSLEEFRNAERRLELKGYYKNSPVYDDYGHHPTEIKAVINSLRDMYPDKNLLVVFQPHRYSRTYYLFEDFVKVLKDIDKLIVTDIYPASENNVYGVSAEELARKSGAVFAKDKEEVFEKVREVHDEGDVILFLGAGSISKWCEEFLKEVNLEK.

113–119 provides a ligand contact to ATP; it reads GSHGKTT.

It belongs to the MurCDEF family.

It is found in the cytoplasm. The catalysed reaction is UDP-N-acetyl-alpha-D-muramate + L-alanine + ATP = UDP-N-acetyl-alpha-D-muramoyl-L-alanine + ADP + phosphate + H(+). It participates in cell wall biogenesis; peptidoglycan biosynthesis. Functionally, cell wall formation. The polypeptide is UDP-N-acetylmuramate--L-alanine ligase (Aquifex aeolicus (strain VF5)).